A 190-amino-acid chain; its full sequence is MTILVINNKGQYNHRIQRSLQYLKIPTELVPNTLSIEEIEAKNPIGLILGGGPSIEGAGNSEEYIKHFDIPILGICLGHQLIAKAYGGQIDTSNTESYAKVEINIVNDENLFSGLAPKMEVWSSHKDEVKSIPDDFEILANSNLCDVESFKHTEKDVYGIQFHPEVHHTPKGSTIFENFYEICKKRCNND.

The region spanning 2 to 189 (TILVINNKGQ…YEICKKRCNN (188 aa)) is the Glutamine amidotransferase type-1 domain. The Nucleophile role is filled by Cys-76. Active-site residues include His-163 and Glu-165.

Heterodimer composed of a glutamine amidotransferase subunit (A) and a GMP-binding subunit (B).

It catalyses the reaction XMP + L-glutamine + ATP + H2O = GMP + L-glutamate + AMP + diphosphate + 2 H(+). It participates in purine metabolism; GMP biosynthesis; GMP from XMP (L-Gln route): step 1/1. Its function is as follows. Catalyzes the synthesis of GMP from XMP. This chain is GMP synthase [glutamine-hydrolyzing] subunit A, found in Methanobrevibacter smithii (strain ATCC 35061 / DSM 861 / OCM 144 / PS).